A 687-amino-acid polypeptide reads, in one-letter code: Glycine--tRNA ligase beta subunit (687 aa).

Belongs to the class-II aminoacyl-tRNA synthetase family. In terms of assembly, tetramer of two alpha and two beta subunits.

The protein localises to the cytoplasm. The enzyme catalyses tRNA(Gly) + glycine + ATP = glycyl-tRNA(Gly) + AMP + diphosphate. This is Glycine--tRNA ligase beta subunit from Trichlorobacter lovleyi (strain ATCC BAA-1151 / DSM 17278 / SZ) (Geobacter lovleyi).